The following is a 591-amino-acid chain: NADPH oxidase 1 (591 aa).

Residues 1 to 36 lie on the Cytoplasmic side of the membrane; the sequence is MAGELRGSRGPLQRIQIAPREAPNLHLTMGNWLVNH. The chain crosses the membrane as a helical span at residues 37 to 59; that stretch reads WLSVLFLVSWLGLNIFLFVYAFL. Residues 60 to 72 lie on the Extracellular side of the membrane; it reads NYEKSDKYYYTRE. The helical transmembrane segment at 73–97 threads the bilayer; sequence ILGTALALARASALCLNFNSMMILI. The 235-residue stretch at 82-316 folds into the Ferric oxidoreductase domain; the sequence is RASALCLNFN…YIFERILRFY (235 aa). At 98–130 the chain is on the cytoplasmic side; the sequence is PVCRNLLSFLRGTCSFCNRTLRKPLDHNLTFHK. Residues histidine 129 and histidine 143 each contribute to the heme site. The helical transmembrane segment at 131–151 threads the bilayer; that stretch reads LVAYMICIFTVIHIIAHLFNF. Over 152–195 the chain is Extracellular; sequence ERYRRSQQAMDGSLASVLSSLSHPEKEDSWLNPIQSPNMTVMYA. The N-linked (GlcNAc...) asparagine glycan is linked to asparagine 189. The chain crosses the membrane as a helical span at residues 196 to 216; the sequence is AFTSIAGLTGVIATVALVLMV. Residues 217–234 are Cytoplasmic-facing; that stretch reads TSAMEFIRRNYFELFWYT. A helical membrane pass occupies residues 235–255; the sequence is HHLFIVYIICLGIHGLGGIVR. Positions 236 and 248 each coordinate heme. Topologically, residues 256–423 are extracellular; that stretch reads GQTEESLGES…TVSEDVFQYE (168 aa). An N-linked (GlcNAc...) asparagine glycan is attached at asparagine 269. Positions 317–418 constitute an FAD-binding FR-type domain; it reads RSQQKVVITK…DGPFGTVSED (102 aa). Residue 365 to 371 participates in FAD binding; it reads HPFTLTS. The chain crosses the membrane as a helical span at residues 424-444; sequence VAVLVGAGIGVTPFASILKSI. An interaction with NOXO1 region spans residues 424–563; sequence VAVLVGAGIG…GVFLCGPRTL (140 aa). Residues 445–591 lie on the Cytoplasmic side of the membrane; it reads WYKFQRADNK…VQFYFNKETF (147 aa). Position 457 is a phosphothreonine (threonine 457).

As to quaternary structure, NOX1, NOXA1, NOXO1, RAC1 and CYBA forms a functional multimeric complex supporting ROS production. Interacts with NOXO1. Interacts (via FAD-binding FR-type domain) with ARHGEF7 (via PH domain). Interacts with NOXA1. FAD serves as cofactor. In terms of processing, phosphorylation at Thr-457 mediated by PKC/PRKBC positively regulates its interaction with NOXA1 and enzyme activity. As to expression, expressed in colon and vascular smooth muscle cells (VSMC).

It localises to the cell projection. Its subcellular location is the invadopodium membrane. The protein resides in the cell membrane. The enzyme catalyses NADPH + 2 O2 = 2 superoxide + NADP(+) + H(+). The oxidase activity is potentiated by NOXA1 and NOXO1. In terms of biological role, NADPH oxidase that catalyzes the generation of superoxide from molecular oxygen utilizing NADPH as an electron donor. The protein is NADPH oxidase 1 (Nox1) of Mus musculus (Mouse).